We begin with the raw amino-acid sequence, 409 residues long: tRNA(Met) cytidine acetate ligase (409 aa).

ATP-binding positions include 7 to 20 (VVEY…HLYH), Gly102, Asn169, and Arg194.

Belongs to the TmcAL family.

The protein localises to the cytoplasm. The catalysed reaction is cytidine(34) in elongator tRNA(Met) + acetate + ATP = N(4)-acetylcytidine(34) in elongator tRNA(Met) + AMP + diphosphate. Catalyzes the formation of N(4)-acetylcytidine (ac(4)C) at the wobble position of elongator tRNA(Met), using acetate and ATP as substrates. First activates an acetate ion to form acetyladenylate (Ac-AMP) and then transfers the acetyl group to tRNA to form ac(4)C34. This Clostridium botulinum (strain Okra / Type B1) protein is tRNA(Met) cytidine acetate ligase.